A 169-amino-acid chain; its full sequence is Ubiquitin-fold modifier-conjugating enzyme 1 (169 aa).

Catalysis depends on Cys-116, which acts as the Glycyl thioester intermediate.

The protein belongs to the ubiquitin-conjugating enzyme family. UFC1 subfamily.

Its function is as follows. E2-like enzyme which forms an intermediate with UFM1 via a thioester linkage. This chain is Ubiquitin-fold modifier-conjugating enzyme 1, found in Nematostella vectensis (Starlet sea anemone).